Consider the following 249-residue polypeptide: Segregation and condensation protein A (249 aa).

This sequence belongs to the ScpA family. Component of a cohesin-like complex composed of ScpA, ScpB and the Smc homodimer, in which ScpA and ScpB bind to the head domain of Smc. The presence of the three proteins is required for the association of the complex with DNA.

The protein resides in the cytoplasm. Its function is as follows. Participates in chromosomal partition during cell division. May act via the formation of a condensin-like complex containing Smc and ScpB that pull DNA away from mid-cell into both cell halves. The chain is Segregation and condensation protein A from Listeria monocytogenes serotype 4b (strain CLIP80459).